The primary structure comprises 242 residues: Probable septum site-determining protein MinC (242 aa).

It belongs to the MinC family. Interacts with MinD and FtsZ.

Cell division inhibitor that blocks the formation of polar Z ring septums. Rapidly oscillates between the poles of the cell to destabilize FtsZ filaments that have formed before they mature into polar Z rings. Prevents FtsZ polymerization. This chain is Probable septum site-determining protein MinC, found in Thioalkalivibrio sulfidiphilus (strain HL-EbGR7).